The following is a 329-amino-acid chain: Malate dehydrogenase (329 aa).

12–18 is a binding site for NAD(+); that stretch reads GAAGQIG. The substrate site is built by arginine 93 and arginine 99. NAD(+)-binding positions include asparagine 106, glutamine 113, and 130–132; that span reads TGN. Residues asparagine 132 and arginine 163 each contribute to the substrate site. Residue histidine 188 is the Proton acceptor of the active site.

The protein belongs to the LDH/MDH superfamily. MDH type 2 family.

It carries out the reaction (S)-malate + NAD(+) = oxaloacetate + NADH + H(+). Catalyzes the reversible oxidation of malate to oxaloacetate. The chain is Malate dehydrogenase from Mycobacterium avium (strain 104).